Reading from the N-terminus, the 465-residue chain is Monogalactosyldiacylglycerol synthase 3, chloroplastic (465 aa).

UDP-binding positions include His-86, Arg-255, 365-369 (GTIAE), and Glu-387.

This sequence belongs to the glycosyltransferase 28 family. As to expression, expressed mainly in roots. Detected in flowers, leaves, stems, siliques and pollen tubes.

The protein resides in the plastid. It is found in the chloroplast outer membrane. It catalyses the reaction a 1,2-diacyl-sn-glycerol + UDP-alpha-D-galactose = a 1,2-diacyl-3-O-(beta-D-galactosyl)-sn-glycerol + UDP + H(+). It carries out the reaction 1,2-di-(9Z,12Z-octadecadienoyl)-sn-glycerol + UDP-alpha-D-galactose = 1,2-di-(9Z,12Z-octadecadienoyl)-3-beta-D-galactosyl-sn-glycerol + UDP + H(+). The enzyme catalyses 1-(9Z-octadecenoyl)-2-hexadecanoyl-sn-glycerol + UDP-alpha-D-galactose = 1-(9Z-octadecenoyl)-2-hexadecanoyl-3-beta-D-galactosyl-sn-glycerol + UDP + H(+). The catalysed reaction is 1,2-di-(9Z-octadecenoyl)-sn-glycerol + UDP-alpha-D-galactose = 1,2-di-(9Z-octadecenoyl)-3-beta-D-galactosyl-sn-glycerol + UDP + H(+). Inhibited by galvestine-1. In terms of biological role, involved in the synthesis of monogalactosyldiacylglycerol, the major structural component of photosynthetic membranes and in the chloroplast envelope biogenesis. Can use both prokaryotic (18:1/16:0) or eukaryotic (18:2/18:2) 1,2-diacylglycerol species, but operates with some preference for the eukaryotic one. Plays a minor role in galactolipid synthesis in chloroplasts. Is essential for membrane lipid remodeling in phosphate-starved roots. Acts as the major factor involved in digalactosyldiacylglycerol (DGDG) biosynthesis in phosphate-starved roots. Does not seem to be required for plant growth under nutrient-sufficient conditions. Required for membrane lipid remodeling in plants grown in acidic conditions. The sequence is that of Monogalactosyldiacylglycerol synthase 3, chloroplastic from Arabidopsis thaliana (Mouse-ear cress).